Here is a 622-residue protein sequence, read N- to C-terminus: V-type ATP synthase subunit I 1 (622 aa).

Helical transmembrane passes span 306–326 (WVNL…YWEV), 328–348 (ISGF…ADAG), 373–393 (PAWC…ALVC), 428–448 (QMHV…LIVV), 459–479 (AEFG…NLIV), 485–505 (PLTG…FIFV), 532–552 (VFAD…GGAI), and 562–582 (PLFA…GHGL).

Belongs to the V-ATPase 116 kDa subunit family.

It is found in the cell membrane. Functionally, produces ATP from ADP in the presence of a proton gradient across the membrane. This chain is V-type ATP synthase subunit I 1 (atpI1), found in Treponema pallidum (strain Nichols).